The chain runs to 310 residues: Transcription factor MYB53 (310 aa).

2 HTH myb-type domains span residues 9–61 and 62–116; these read ETGL…TNYL and RPDI…KKKL. DNA-binding regions (H-T-H motif) lie at residues 37–61 and 89–112; these read WSAL…TNYL and WSMI…NTHL.

In terms of assembly, interacts with FBX5. Highly expressed in roots and at lower levels in leaves, stems and flowers.

It localises to the nucleus. Probable transcription factor. The polypeptide is Transcription factor MYB53 (Arabidopsis thaliana (Mouse-ear cress)).